A 474-amino-acid polypeptide reads, in one-letter code: MASVPSSSSLPVSHVRRHEDVSTPSAPPTKRSNNQSQPPESYEPNTWLQQQREQEQQKKLAAENIKKQSIEATGNNEMVGEEEEDILSKPCGPHKRRFQFVMIRNITFAIPEGYDVEPNSIEYLGGGSFGNVIKTSAVCRDGLRRYVAIKKMREPFFDPHHARRIFRETKLLQLMRHDNIICALDIYTPDEENDFRDVYVVTEFAGRSLYQILKQQRDYGRRVLTDEHIKFIIYQIIRALKYIHSANIIHRDLKPGNLALTDDSDLMILDFGLARSLEKKDTSLTQYVQTRWYRSPEVIYWKIDSYTNLADMWSLGCIAAELLTGEPLFPGDEPNAQYQRITQLCGSPDEELLTKIENDNSSAIKAVIQSYTTHKRRNFRDVFSAHNPSEDFIDLLEKLLVLDPEKRITVEEAIQHPYLAEFSLPEDEPRADHIFDLDDSQARTRFEWRDAVWKEIMNYKRLSSSPLIPGEADR.

A compositionally biased stretch (low complexity) spans 1–13 (MASVPSSSSLPVS). Residues 1 to 90 (MASVPSSSSL…EEEEDILSKP (90 aa)) are disordered. The segment covering 30 to 48 (KRSNNQSQPPESYEPNTWL) has biased composition (polar residues). The span at 52–69 (REQEQQKKLAAENIKKQS) shows a compositional bias: basic and acidic residues. The Protein kinase domain maps to 114–419 (YDVEPNSIEY…VEEAIQHPYL (306 aa)). ATP contacts are provided by residues 124 to 132 (LGGGSFGNV) and Lys150. Residue Asp252 is the Proton acceptor of the active site. Phosphothreonine is present on Thr285. A TXY motif is present at residues 285–287 (TQY). Position 287 is a phosphotyrosine (Tyr287).

The protein belongs to the protein kinase superfamily. CMGC Ser/Thr protein kinase family. MAP kinase subfamily. In terms of assembly, interacts with mak-2. May interact with vhp-1. May interact with uev-3. It depends on Mg(2+) as a cofactor. In terms of processing, dually phosphorylated on Thr-285 and Tyr-287, which activates the enzyme. As to expression, expressed throughout the intestine.

It is found in the nucleus. Its subcellular location is the cytoplasm. The protein localises to the cell projection. The protein resides in the axon. It localises to the dendrite. It is found in the cilium. The enzyme catalyses L-seryl-[protein] + ATP = O-phospho-L-seryl-[protein] + ADP + H(+). The catalysed reaction is L-threonyl-[protein] + ATP = O-phospho-L-threonyl-[protein] + ADP + H(+). With respect to regulation, activated by phosphorylation on threonine and tyrosine. Functionally, responds to activation by environmental stress and pro-inflammatory cytokines by phosphorylating downstream targets. Involved in axon regeneration after injury, probably downstream of dlk-1 and mkk-4 and upstream of mak-2. May phosphorylate mak-2. Plays a role in cilium length regulation, possibly by reducing rab-5 mediated endocytosis. Plays a role in the formation of muscle connections, also called muscle arm extensions, between the body wall and the motor axons in the dorsal and ventral cord. The protein is Mitogen-activated protein kinase pmk-3 (pmk-3) of Caenorhabditis elegans.